Here is a 62-residue protein sequence, read N- to C-terminus: Phospholipase A2 superbin a (62 aa).

The Ca(2+) site is built by tyrosine 28, glycine 30, and glycine 32. A disulfide bridge links cysteine 29 with cysteine 45. Histidine 48 is a catalytic residue. Aspartate 49 is a binding site for Ca(2+).

The cofactor is Ca(2+). In terms of tissue distribution, expressed by the venom gland.

It is found in the secreted. The catalysed reaction is a 1,2-diacyl-sn-glycero-3-phosphocholine + H2O = a 1-acyl-sn-glycero-3-phosphocholine + a fatty acid + H(+). In terms of biological role, snake venom phospholipase A2 (PLA2) that inhibits collagen-induced platelet aggregation. In terms of inhibition of platelet aggregation, superbin a is more potent as superbin b, c, and d. PLA2 catalyzes the calcium-dependent hydrolysis of the 2-acyl groups in 3-sn-phosphoglycerides. The chain is Phospholipase A2 superbin a from Austrelaps superbus (Lowland copperhead snake).